The chain runs to 2480 residues: Polyprotein P1234 (2480 aa).

The 231-residue stretch at 27–257 (ESQQVTPNDH…ESRRLLKSWH (231 aa)) folds into the Alphavirus-like MT domain. The tract at residues 242–261 (GXTLYIESRRLLKSWHLPSV) is nsP1 membrane-binding. S-palmitoyl cysteine; by host attachment occurs at residues Cys415 and Cys417. Residues 480–506 (YSGDRNEAREAEKEAEETKEAELTREA) form a disordered region. The segment covering 483 to 504 (DRNEAREAEKEAEETKEAELTR) has biased composition (basic and acidic residues). One can recognise a (+)RNA virus helicase ATP-binding domain in the interval 688-840 (DLINPPFHEF…HDICTQVLHK (153 aa)). An a ribonucleoside 5'-triphosphate-binding site is contributed by 719 to 726 (GVPGSGKS). Residues 841-989 (SISRRCTLPI…LEEWQEEHDN (149 aa)) enclose the (+)RNA virus helicase C-terminal domain. One can recognise a Peptidase C9 domain in the interval 1002–1324 (DPFQNKAKVC…QRLSSMFACN (323 aa)). The tract at residues 1003–1022 (PFQNKAKVCWAKCLVQVLET) is nucleolus localization signal. The For cysteine protease nsP2 activity role is filled by Cys1011. The Nuclear export signal signature appears at 1055 to 1064 (TKYYGVDLDS). His1080 acts as the For cysteine protease nsP2 activity in catalysis. The Nuclear localization signal signature appears at 1179-1183 (PHKRV). Residues 1332 to 1491 (APSYRVRRTD…KIQEAIDRRT (160 aa)) form the Macro domain. Positions 1341, 1355, 1363, 1443, 1444, and 1445 each coordinate ADP-D-ribose. 4 residues coordinate Zn(2+): Cys1593, Cys1595, Cys1618, and Cys1636. Thr1675 bears the Phosphothreonine; by host mark. 2 consecutive short sequence motifs (FGDF; binding to host G3BP1) follow at residues 1843–1846 (FGDF) and 1854–1857 (FGDI). The RdRp catalytic domain maps to 2234–2349 (DAVLETDIAS…HGVRSDPLMA (116 aa)).

In terms of assembly, interacts with non-structural protein 3. Interacts with RNA-directed RNA polymerase nsP4. Interacts with protease nsP2. interacts with itself. As to quaternary structure, interacts with mRNA-capping enzyme nsP1. Interacts with host DDX1. Interacts with host DDX3. Interacts (via C-terminus) with host G3BP1; this interaction inhibits the formation of host stress granules on viral mRNAs and the nsp3-G3BP1 complexes bind viral RNAs and probably orchestrate the assembly of viral replication complexes. Interacts (via C-terminus) with host G3BP2; this interaction inhibits the formation of host stress granules on viral mRNAs and the nsp3-G3BP2 complexes bind viral RNAs and probably orchestrate the assembly of viral replication complexes. Interacts with mRNA-capping enzyme nsP1. Interacts with protease nsP2. interacts with itself. In terms of assembly, interacts with RNA-directed RNA polymerase nsP4. Interacts with mRNA-capping enzyme nsP1. Interacts with KPNA1/karyopherin-alpha1; this interaction probably allows the active transport of protease nsP2 into the host nucleus. Mg(2+) serves as cofactor. Requires Mn(2+) as cofactor. Post-translationally, specific enzymatic cleavages in vivo yield mature proteins. The processing of the polyprotein is temporally regulated. In early stages (1.7 hpi), P1234 is first cleaved in trans through its nsP2 protease activity, releasing P123' and nsP4, which associate to form the early replication complex. At the same time, P1234 is also cut at the nsP1/nsP2 site early in infection but with lower efficiency. After replication of the viral minus-strand RNAs (4 hpi), the polyproteins are cut at the nsP1/nsP2 and nsP2/nsP3 sites very efficiently, preventing accumulation of P123' and P1234 and allowing the formation of the late replication complex. NsP3'/nsP4 site is not cleaved anymore and P34 is produced rather than nsP4. In terms of processing, specific enzymatic cleavages in vivo yield mature proteins. The processing of the polyprotein is temporally regulated. In early stages (1.7 hpi), P123 is cleaved at the nsP1/nsP2 site with low efficiency. After replication of the viral minus-strand RNAs (4 hpi), the polyproteins are cut at the nsP1/nsP2 and nsP2/nsP3 sites very efficiently, preventing accumulation of P123 and allowing the formation of the late replication complex. Specific enzymatic cleavages in vivo yield mature proteins. The processing of the polyprotein is temporally regulated. In early stages (1.7 hpi), P123' is cleaved at the nsP1/nsP2 site with low efficiency. After replication of the viral minus-strand RNAs (4 hpi), the polyproteins are cut at the nsP1/nsP2 and nsP2/nsP3 sites very efficiently, preventing accumulation of P123' and allowing the formation of the late replication complex. Post-translationally, palmitoylated by host palmitoyltransferases ZDHHC2 and ZDHHC19. In terms of processing, phosphorylated by host on serines and threonines. Ubiquitinated; targets the protein for rapid degradation via the ubiquitin system. Nsp4 is present in extremely low quantities due to low frequency of translation through the amber stop-codon and the degradation by the ubiquitin pathway.

The protein localises to the host cytoplasmic vesicle membrane. The protein resides in the host cell membrane. It is found in the host cell projection. Its subcellular location is the host filopodium. It localises to the host nucleus. The protein localises to the host cytoplasm. The enzyme catalyses GTP + S-adenosyl-L-methionine = N(7)-methyl-GTP + S-adenosyl-L-homocysteine. The catalysed reaction is N(7)-methyl-GTP + L-histidyl-[protein] = N(tele)-(N(7)-methylguanosine 5'-phospho)-L-histidyl-[protein] + diphosphate. It catalyses the reaction N(tele)-(N(7)-methylguanosine 5'-phospho)-L-histidyl-[protein] + a 5'-end diphospho-(purine-ribonucleoside) in mRNA + H(+) = a 5'-end (N(7)-methyl 5'-triphosphoguanosine)-(purine-ribonucleoside) in mRNA + L-histidyl-[protein]. It carries out the reaction a 5'-end triphospho-ribonucleoside in mRNA + H2O = a 5'-end diphospho-ribonucleoside in mRNA + phosphate + H(+). The enzyme catalyses a ribonucleoside 5'-triphosphate + H2O = a ribonucleoside 5'-diphosphate + phosphate + H(+). The catalysed reaction is ATP + H2O = ADP + phosphate + H(+). It catalyses the reaction RNA(n) + a ribonucleoside 5'-triphosphate = RNA(n+1) + diphosphate. It carries out the reaction 4-O-(ADP-D-ribosyl)-L-aspartyl-[protein] + H2O = L-aspartyl-[protein] + ADP-D-ribose + H(+). The enzyme catalyses 5-O-(ADP-D-ribosyl)-L-glutamyl-[protein] + H2O = L-glutamyl-[protein] + ADP-D-ribose + H(+). The catalysed reaction is RNA(n) + ATP = RNA(n)-3'-adenine ribonucleotide + diphosphate. It catalyses the reaction ADP-alpha-D-ribose 1''-phosphate + H2O = ADP-D-ribose + phosphate. Its function is as follows. Inactive precursor of the viral replicase, which is activated by cleavages carried out by the viral protease nsP2. In terms of biological role, the early replication complex formed by the polyprotein P123 and nsP4 synthesizes minus-strand RNAs. As soon P123 is cleaved into mature proteins, the plus-strand RNAs synthesis begins. Functionally, the early replication complex formed by the polyprotein P123' and nsP4 synthesizes minus-strand RNAs. Polyprotein P123' is a short-lived polyprotein that accumulates during early stage of infection. As soon P123' is cleaved into mature proteins, the plus-strand RNAs synthesis begins. Cytoplasmic capping enzyme that catalyzes two virus-specific reactions: methyltransferase and nsP1 guanylyltransferase. mRNA-capping is necessary since all viral RNAs are synthesized in the cytoplasm, and host capping enzymes are restricted to the nucleus. The enzymatic reaction involves a covalent link between 7-methyl-GMP and nsP1, whereas eukaryotic capping enzymes form a covalent complex only with GMP. nsP1 capping consists in the following reactions: GTP is first methylated into 7-methyl-GMP and then is covalently linked to nsP1 to form the m7GMp-nsP1 complex from which 7-methyl-GMP complex is transferred to the mRNA to create the cap structure. NsP1 is also needed for the initiation of the minus-strand RNAs synthesis. Probably serves as a membrane anchor for the replication complex composed of nsP1-nsP4. Palmitoylated nsP1 is remodeling host cell cytoskeleton, and induces filopodium-like structure formation at the surface of the host cell. Its function is as follows. Multifunctional protein whose N-terminus is part of the RNA polymerase complex and displays NTPase, RNA triphosphatase and helicase activities. NTPase and RNA triphosphatase are involved in viral RNA capping and helicase keeps a check on the dsRNA replication intermediates. The C-terminus harbors a protease that specifically cleaves the polyproteins and releases the mature proteins. Required for the shutoff of minus-strand RNAs synthesis. Specifically inhibits the host IFN response by promoting the nuclear export of host STAT1. Also inhibits host transcription by inducing the rapid proteasome-dependent degradation of POLR2A, a catalytic subunit of the RNAPII complex. The resulting inhibition of cellular protein synthesis serves to ensure maximal viral gene expression and to evade host immune response. In terms of biological role, seems to be essential for minus-strand RNAs and subgenomic 26S mRNAs synthesis. Displays mono-ADP-ribosylhydrolase activity. ADP-ribosylation is a post-translational modification that controls various processes of the host cell and the virus probably needs to revert it for optimal viral replication. Binds proteins of FXR family and sequesters them into the viral RNA replication complexes thereby inhibiting the formation of host stress granules on viral mRNAs. The nsp3'-FXR complexes bind viral RNAs and probably orchestrate the assembly of viral replication complexes, thanks to the ability of FXR family members to self-assemble and bind DNA. Functionally, seems to be essential for minus-strand RNAs and subgenomic 26S mRNAs synthesis. Displays mono-ADP-ribosylhydrolase activity. ADP-ribosylation is a post-translational modification that controls various processes of the host cell and the virus probably needs to revert it for optimal viral replication. Binds proteins of G3BP family and sequesters them into the viral RNA replication complexes thereby inhibiting the formation of host stress granules on viral mRNAs. The nsp3-G3BP complexes bind viral RNAs and probably orchestrate the assembly of viral replication complexes, thanks to the ability of G3BP family members to self-assemble and bind DNA. RNA dependent RNA polymerase. Replicates genomic and antigenomic RNA by recognizing replications specific signals. The early replication complex formed by the polyprotein P123 and nsP4 synthesizes minus-strand RNAs. The late replication complex composed of fully processed nsP1-nsP4 is responsible for the production of genomic and subgenomic plus-strand RNAs. This Aedes (Common banded mosquito) protein is Polyprotein P1234.